Reading from the N-terminus, the 490-residue chain is Betaine aldehyde dehydrogenase (490 aa).

Asp-93 is a binding site for K(+). Residue 150 to 152 (GAW) coordinates NAD(+). Catalysis depends on Lys-162, which acts as the Charge relay system. 176–179 (KPSE) provides a ligand contact to NAD(+). Val-180 contacts K(+). An NAD(+)-binding site is contributed by 230-233 (GIAS). Leu-246 contacts K(+). Catalysis depends on Glu-252, which acts as the Proton acceptor. Residues Gly-254, Cys-286, and Glu-387 each contribute to the NAD(+) site. The active-site Nucleophile is the Cys-286. Cys-286 is modified (cysteine sulfenic acid (-SOH)). Positions 457 and 460 each coordinate K(+). Catalysis depends on Glu-464, which acts as the Charge relay system.

It belongs to the aldehyde dehydrogenase family. In terms of assembly, dimer of dimers. K(+) is required as a cofactor.

It catalyses the reaction betaine aldehyde + NAD(+) + H2O = glycine betaine + NADH + 2 H(+). The protein operates within amine and polyamine biosynthesis; betaine biosynthesis via choline pathway; betaine from betaine aldehyde: step 1/1. In terms of biological role, involved in the biosynthesis of the osmoprotectant glycine betaine. Catalyzes the irreversible oxidation of betaine aldehyde to the corresponding acid. This is Betaine aldehyde dehydrogenase from Yersinia pseudotuberculosis serotype IB (strain PB1/+).